Here is a 1091-residue protein sequence, read N- to C-terminus: Error-prone DNA polymerase (1091 aa).

Residues 1–51 (MGWSNGPPSWAEMERVLNGKPRHAGVPAFDADGDVPRSRKRGAYQPPGRER) form a disordered region.

Belongs to the DNA polymerase type-C family. DnaE2 subfamily.

It is found in the cytoplasm. It carries out the reaction DNA(n) + a 2'-deoxyribonucleoside 5'-triphosphate = DNA(n+1) + diphosphate. Functionally, DNA polymerase involved in damage-induced mutagenesis and translesion synthesis (TLS). It is not the major replicative DNA polymerase. The chain is Error-prone DNA polymerase from Mycobacterium bovis (strain ATCC BAA-935 / AF2122/97).